Here is a 365-residue protein sequence, read N- to C-terminus: UDP-N-acetylglucosamine--N-acetylmuramyl-(pentapeptide) pyrophosphoryl-undecaprenol N-acetylglucosamine transferase (365 aa).

UDP-N-acetyl-alpha-D-glucosamine is bound by residues 10–12 (TGG), N128, R170, S199, I250, and Q295.

This sequence belongs to the glycosyltransferase 28 family. MurG subfamily.

Its subcellular location is the cell inner membrane. The catalysed reaction is di-trans,octa-cis-undecaprenyl diphospho-N-acetyl-alpha-D-muramoyl-L-alanyl-D-glutamyl-meso-2,6-diaminopimeloyl-D-alanyl-D-alanine + UDP-N-acetyl-alpha-D-glucosamine = di-trans,octa-cis-undecaprenyl diphospho-[N-acetyl-alpha-D-glucosaminyl-(1-&gt;4)]-N-acetyl-alpha-D-muramoyl-L-alanyl-D-glutamyl-meso-2,6-diaminopimeloyl-D-alanyl-D-alanine + UDP + H(+). It functions in the pathway cell wall biogenesis; peptidoglycan biosynthesis. Its function is as follows. Cell wall formation. Catalyzes the transfer of a GlcNAc subunit on undecaprenyl-pyrophosphoryl-MurNAc-pentapeptide (lipid intermediate I) to form undecaprenyl-pyrophosphoryl-MurNAc-(pentapeptide)GlcNAc (lipid intermediate II). This Chlorobium luteolum (strain DSM 273 / BCRC 81028 / 2530) (Pelodictyon luteolum) protein is UDP-N-acetylglucosamine--N-acetylmuramyl-(pentapeptide) pyrophosphoryl-undecaprenol N-acetylglucosamine transferase.